A 715-amino-acid chain; its full sequence is MTEVASSVVYEVLGRRAQDVDEPIMDYIINVLADEDFDFGEEGEGAFDAVGELLVAAECVSDFEECRLVCSKLSDKFGKHGLVKPTPTVRSLAMPVRMNDGMDDGPVKKKKPEPVDGPLLTERDLAKIERRKKKDDRQRELQYQQHVAEMEAAKAGMPTVSVNHDTGGGSAIRDIHMDNFNVSVGGRDLIVDGSITLSFGRHYGLVGRNGTGKTTFLRYMAMHAIEGIPTNCQILHVEQEVVGDKTTALQCVLNTDIERTKLLEEEIQILAKQRETEEPTAKDGMPTKDTVEGDLMSQRLEEIYKRLDAIDAYTAEARAASILAGLSFTPEMQLKATNTFSGGWRMRIALARALFIEPDLLLLDEPTNHLDLHAVLWLETYLTKWPKTFIVVSHAREFLNTVVTDIIHLQNQKLSTYKGNYDIFERTREEQVKNQQKAFESSERSRSHMQAFIDKFRYNAKRASLVQSRIKALDRLAHVDQVINDPDYKFEFPTPDDKPGPPIISFSDASFGYPGGPLLFRNLNFGIDLDSRIAMVGPNGIGKSTILKLISGDLQPSSGTVFRSAKVRVAVFSQHHVDGLDLSSNPLLYMMRCYPGVPEQKLRSHLGSLGVTGNLALQPMYTLSGGQKSRVAFAKITFKKPHLLLLDEPSNHLDLDAVEALIQGLVLFQGGICMVSHDEHLISGSVDELWVVSDGRIAPFHGTFHDYKKLLQSST.

Thr-2 bears the N-acetylthreonine mark. The tract at residues 96–118 (VRMNDGMDDGPVKKKKPEPVDGP) is disordered. 2 consecutive ABC transporter domains span residues 175-436 (IHMD…KNQQ) and 504-713 (ISFS…LLQS). Residues 207 to 214 (GRNGTGKT) and 537 to 544 (GPNGIGKS) contribute to the ATP site.

It belongs to the ABC transporter superfamily. ABCF family. EF3 (TC 3.A.1.121) subfamily.

This Arabidopsis thaliana (Mouse-ear cress) protein is ABC transporter F family member 3 (ABCF3).